Consider the following 298-residue polypeptide: Protease HtpX homolog (298 aa).

The next 2 membrane-spanning stretches (helical) occupy residues 14–34 (VVLL…AGYL) and 39–59 (YAMG…SMIF). His-143 is a binding site for Zn(2+). Glu-144 is an active-site residue. Residue His-147 coordinates Zn(2+). A run of 2 helical transmembrane segments spans residues 158-178 (IAVA…RMLW) and 197-217 (IITL…ASLI). Glu-226 serves as a coordination point for Zn(2+).

It belongs to the peptidase M48B family. Zn(2+) serves as cofactor.

It localises to the cell membrane. This Streptococcus pyogenes serotype M28 (strain MGAS6180) protein is Protease HtpX homolog.